We begin with the raw amino-acid sequence, 273 residues long: MRKLLRVLLACLAAPLLHCAWAQPATGKTEVLWLGQSAFRISTPGGKVIVTDPWLKLNPLTPAEYKNLQALGKVDVILVTHGHWDHFADAPELALLNQVPMHAPGDMNQTVGLLGILPPNLVPRFNKSGTITPAPGIKVTAVKAEHSSVIVWKNPSTGKDESHPGGEPVGFIIELENGFRIYHMGDTGLFSDMRFIAEYYKPDLVLMPIGGHFTMGPADAAYATREWLKPKTVIPMHYGANPLGRGTPTEYMRALGDSGTRVLPLKPGEKAEF.

This sequence belongs to the UPF0173 family.

The polypeptide is UPF0173 metal-dependent hydrolase Bpro_4324 (Polaromonas sp. (strain JS666 / ATCC BAA-500)).